A 186-amino-acid chain; its full sequence is Adenylate kinase (186 aa).

11–16 (GAGKGT) contributes to the ATP binding site. The interval 31–60 (STGDILRAAVKNGTAMGIEAKKYMDAGDLV) is NMP. Residues Thr-32, Arg-37, 58 to 60 (DLV), 86 to 89 (GFPR), and Gln-93 each bind AMP. Residues 127–137 (GRAIKEGRSDD) form an LID region. Position 128 (Arg-128) interacts with ATP. The AMP site is built by Arg-134 and Arg-145. Gly-173 contributes to the ATP binding site.

This sequence belongs to the adenylate kinase family. Monomer.

It localises to the cytoplasm. The catalysed reaction is AMP + ATP = 2 ADP. The protein operates within purine metabolism; AMP biosynthesis via salvage pathway; AMP from ADP: step 1/1. Its function is as follows. Catalyzes the reversible transfer of the terminal phosphate group between ATP and AMP. Plays an important role in cellular energy homeostasis and in adenine nucleotide metabolism. This Leptospira biflexa serovar Patoc (strain Patoc 1 / Ames) protein is Adenylate kinase.